The sequence spans 87 residues: MANSAQARKRARQAVKQRAHNASLRSALRTAIKKIIKAVEAGDKTAAQSVFNENVSVIDRIADKKIIHKNKAARHKSRLSAAIKALA.

The segment at 1-22 is disordered; that stretch reads MANSAQARKRARQAVKQRAHNA. Residues 7 to 19 are compositionally biased toward basic residues; the sequence is ARKRARQAVKQRA.

It belongs to the bacterial ribosomal protein bS20 family.

Its function is as follows. Binds directly to 16S ribosomal RNA. In Methylobacillus flagellatus (strain ATCC 51484 / DSM 6875 / VKM B-1610 / KT), this protein is Small ribosomal subunit protein bS20.